Reading from the N-terminus, the 222-residue chain is GTP cyclohydrolase 1 (222 aa).

Cys111, His114, and Cys182 together coordinate Zn(2+).

The protein belongs to the GTP cyclohydrolase I family. Toroid-shaped homodecamer, composed of two pentamers of five dimers.

It carries out the reaction GTP + H2O = 7,8-dihydroneopterin 3'-triphosphate + formate + H(+). Its pathway is cofactor biosynthesis; 7,8-dihydroneopterin triphosphate biosynthesis; 7,8-dihydroneopterin triphosphate from GTP: step 1/1. Its activity is regulated as follows. Allosteric enzyme. Activity is modulated by K(+), divalent cations, UTP, and tetrahydrobiopterin. Tetrahydrobiopterin is an inhibitor of this enzyme. The protein is GTP cyclohydrolase 1 of Salmonella typhi.